The sequence spans 204 residues: FMN-dependent NADH:quinone oxidoreductase (204 aa).

FMN contacts are provided by residues Ser10 and 15-17 (SLS).

The protein belongs to the azoreductase type 1 family. In terms of assembly, homodimer. FMN is required as a cofactor.

It carries out the reaction 2 a quinone + NADH + H(+) = 2 a 1,4-benzosemiquinone + NAD(+). It catalyses the reaction N,N-dimethyl-1,4-phenylenediamine + anthranilate + 2 NAD(+) = 2-(4-dimethylaminophenyl)diazenylbenzoate + 2 NADH + 2 H(+). Its function is as follows. Quinone reductase that provides resistance to thiol-specific stress caused by electrophilic quinones. Also exhibits azoreductase activity. Catalyzes the reductive cleavage of the azo bond in aromatic azo compounds to the corresponding amines. The sequence is that of FMN-dependent NADH:quinone oxidoreductase from Rhizobium johnstonii (strain DSM 114642 / LMG 32736 / 3841) (Rhizobium leguminosarum bv. viciae).